The chain runs to 409 residues: Multifunctional CCA protein (409 aa).

Positions 8 and 11 each coordinate ATP. The CTP site is built by Gly8 and Arg11. Asp21 and Asp23 together coordinate Mg(2+). Residues Arg91, Arg137, and Arg140 each coordinate ATP. Positions 91, 137, and 140 each coordinate CTP. The HD domain occupies 228–329; it reads TGAHTLSVLL…LELLQSFDVF (102 aa).

It belongs to the tRNA nucleotidyltransferase/poly(A) polymerase family. Bacterial CCA-adding enzyme type 1 subfamily. In terms of assembly, monomer. Can also form homodimers and oligomers. Mg(2+) is required as a cofactor. It depends on Ni(2+) as a cofactor.

The catalysed reaction is a tRNA precursor + 2 CTP + ATP = a tRNA with a 3' CCA end + 3 diphosphate. It carries out the reaction a tRNA with a 3' CCA end + 2 CTP + ATP = a tRNA with a 3' CCACCA end + 3 diphosphate. Catalyzes the addition and repair of the essential 3'-terminal CCA sequence in tRNAs without using a nucleic acid template. Adds these three nucleotides in the order of C, C, and A to the tRNA nucleotide-73, using CTP and ATP as substrates and producing inorganic pyrophosphate. tRNA 3'-terminal CCA addition is required both for tRNA processing and repair. Also involved in tRNA surveillance by mediating tandem CCA addition to generate a CCACCA at the 3' terminus of unstable tRNAs. While stable tRNAs receive only 3'-terminal CCA, unstable tRNAs are marked with CCACCA and rapidly degraded. The sequence is that of Multifunctional CCA protein from Pseudomonas fluorescens (strain ATCC BAA-477 / NRRL B-23932 / Pf-5).